The following is a 2890-amino-acid chain: Bifunctional DNA-directed RNA polymerase subunit beta-beta' (2890 aa).

The interval 1 to 1377 is DNA-directed RNA polymerase subunit beta; it reads MSKKIPLKNR…DINIFGDDVD (1377 aa). A DNA-directed RNA polymerase subunit beta' region spans residues 1384–2890; the sequence is PIMIKEDDRP…LRALEDNSKF (1507 aa). Residues C1449, C1451, C1465, and C1468 each contribute to the Zn(2+) site. Positions 1849, 1851, and 1853 each coordinate Mg(2+). The Zn(2+) site is built by C2179, C2253, C2260, and C2263.

This sequence in the N-terminal section; belongs to the RNA polymerase beta chain family. In the C-terminal section; belongs to the RNA polymerase beta' chain family. In terms of assembly, the RNAP catalytic core consists of 2 alpha, 1 beta/beta' and 1 omega subunit. When a sigma factor is associated with the core the holoenzyme is formed, which can initiate transcription. Mg(2+) is required as a cofactor. Requires Zn(2+) as cofactor.

The catalysed reaction is RNA(n) + a ribonucleoside 5'-triphosphate = RNA(n+1) + diphosphate. Functionally, DNA-dependent RNA polymerase catalyzes the transcription of DNA into RNA using the four ribonucleoside triphosphates as substrates. This is Bifunctional DNA-directed RNA polymerase subunit beta-beta' (rpoBC) from Helicobacter pylori (strain J99 / ATCC 700824) (Campylobacter pylori J99).